A 501-amino-acid polypeptide reads, in one-letter code: Proline--tRNA ligase (501 aa).

The protein belongs to the class-II aminoacyl-tRNA synthetase family. ProS type 3 subfamily. As to quaternary structure, homodimer.

It localises to the cytoplasm. The enzyme catalyses tRNA(Pro) + L-proline + ATP = L-prolyl-tRNA(Pro) + AMP + diphosphate. In terms of biological role, catalyzes the attachment of proline to tRNA(Pro) in a two-step reaction: proline is first activated by ATP to form Pro-AMP and then transferred to the acceptor end of tRNA(Pro). The sequence is that of Proline--tRNA ligase from Halobacterium salinarum (strain ATCC 29341 / DSM 671 / R1).